The sequence spans 463 residues: DNA polymerase subunit gamma-2, mitochondrial (463 aa).

Residues 1-44 (MLLTLKNTGQLLVAACSKVARSLAKYHPRVNHHRHCVWCSKRGL) constitute a mitochondrion transit peptide.

As to quaternary structure, heterotrimer composed of a catalytic subunit and a homodimer of accessory subunits.

It localises to the mitochondrion. Mitochondrial polymerase processivity subunit. It regulates the polymerase and exonuclease activities promoting processive DNA synthesis. Binds to ss-DNA. In Xenopus laevis (African clawed frog), this protein is DNA polymerase subunit gamma-2, mitochondrial (polg2).